An 81-amino-acid chain; its full sequence is Anaphase-promoting complex subunit emb-1 (81 aa).

The APC/C is probably composed of at least 12 subunits: apc-2, apc-10, apc-11, cdc-26, emb-1, emb-27, emb-30, mat-1, mat-2, mat-3, such-1 and gfi-3. Expressed in germ cells.

It functions in the pathway protein modification; protein ubiquitination. Probable component of the anaphase promoting complex/cyclosome (APC/C), a cell cycle-regulated E3 ubiquitin ligase that controls progression through mitosis and the G1 phase of the cell cycle. The APC/C complex acts by mediating ubiquitination and subsequent degradation of target proteins. Developmental role in early embryogenesis and the metaphase to anaphase transition in meiosis and mitosis. May be required for germline proliferation. Required for male tail development and hermaphrodite vulva formation. The polypeptide is Anaphase-promoting complex subunit emb-1 (Caenorhabditis elegans).